Reading from the N-terminus, the 378-residue chain is Chaperone protein DnaJ (378 aa).

In terms of domain architecture, J spans 5-69; the sequence is EYYDRLGVSK…QKRAAYDQYG (65 aa). The CR-type zinc finger occupies 134–216; it reads GVEKEVSYNR…CHGTGHEKQA (83 aa). 8 residues coordinate Zn(2+): Cys147, Cys150, Cys164, Cys167, Cys190, Cys193, Cys204, and Cys207. CXXCXGXG motif repeat units lie at residues 147 to 154, 164 to 171, 190 to 197, and 204 to 211; these read CGTCLGSG, CRKCHGSG, CDICHGSG, and CQTCHGTG.

It belongs to the DnaJ family. As to quaternary structure, homodimer. Zn(2+) serves as cofactor.

The protein localises to the cytoplasm. Participates actively in the response to hyperosmotic and heat shock by preventing the aggregation of stress-denatured proteins and by disaggregating proteins, also in an autonomous, DnaK-independent fashion. Unfolded proteins bind initially to DnaJ; upon interaction with the DnaJ-bound protein, DnaK hydrolyzes its bound ATP, resulting in the formation of a stable complex. GrpE releases ADP from DnaK; ATP binding to DnaK triggers the release of the substrate protein, thus completing the reaction cycle. Several rounds of ATP-dependent interactions between DnaJ, DnaK and GrpE are required for fully efficient folding. Also involved, together with DnaK and GrpE, in the DNA replication of plasmids through activation of initiation proteins. The protein is Chaperone protein DnaJ of Streptococcus pyogenes serotype M6 (strain ATCC BAA-946 / MGAS10394).